The following is a 217-amino-acid chain: Adenylate kinase (217 aa).

Residue G10 to T15 participates in ATP binding. The segment at S30 to V59 is NMP. AMP contacts are provided by residues T31, R36, E57 to V59, G85 to R88, and Q92. The segment at G126–D164 is LID. Residue R127 participates in ATP binding. 2 residues coordinate Zn(2+): C130 and C133. Residue T136–Y137 participates in ATP binding. 2 residues coordinate Zn(2+): C150 and C153. Positions 161 and 172 each coordinate AMP. Q200 serves as a coordination point for ATP.

It belongs to the adenylate kinase family. In terms of assembly, monomer.

Its subcellular location is the cytoplasm. It catalyses the reaction AMP + ATP = 2 ADP. It participates in purine metabolism; AMP biosynthesis via salvage pathway; AMP from ADP: step 1/1. Catalyzes the reversible transfer of the terminal phosphate group between ATP and AMP. Plays an important role in cellular energy homeostasis and in adenine nucleotide metabolism. This is Adenylate kinase from Limosilactobacillus reuteri subsp. reuteri (strain JCM 1112) (Lactobacillus reuteri).